The chain runs to 137 residues: Transcription antitermination protein NusB (137 aa).

This sequence belongs to the NusB family.

In terms of biological role, involved in transcription antitermination. Required for transcription of ribosomal RNA (rRNA) genes. Binds specifically to the boxA antiterminator sequence of the ribosomal RNA (rrn) operons. The chain is Transcription antitermination protein NusB from Aeromonas hydrophila subsp. hydrophila (strain ATCC 7966 / DSM 30187 / BCRC 13018 / CCUG 14551 / JCM 1027 / KCTC 2358 / NCIMB 9240 / NCTC 8049).